The sequence spans 331 residues: Homoarginine-6-hydroxylase 2-ODD-C23 (331 aa).

The Fe2OG dioxygenase domain occupies 182-289 (PFWVMRLIGY…RVSVVYFYET (108 aa)). Fe cation contacts are provided by histidine 212, aspartate 214, and histidine 270. Arginine 280 provides a ligand contact to 2-oxoglutarate.

Belongs to the iron/ascorbate-dependent oxidoreductase family. It depends on Fe(2+) as a cofactor.

It is found in the cytoplasm. The protein localises to the cytosol. It carries out the reaction L-homoarginine + 2-oxoglutarate + O2 = 6-hydroxy-L-homoarginine + succinate + CO2. Its function is as follows. 2-oxoglutarate-dependent dioxygenase catalyzing homoarginine 6-hydroxylation thus producing 6-hydroxy-L-homoarginine. Guanidine (Gd) is in turn synthesized by the spontaneous conversion of 6-hydroxy-L-homoarginine to (S)-2-amino-6-oxohexanoate (RHEA:79843); guanidine is a nitrogen-rich compound that can serve as a defense or signaling substance. The chain is Homoarginine-6-hydroxylase 2-ODD-C23 from Glycine max (Soybean).